The chain runs to 182 residues: Probable RNA 2'-phosphotransferase (182 aa).

The protein belongs to the KptA/TPT1 family.

Removes the 2'-phosphate from RNA via an intermediate in which the phosphate is ADP-ribosylated by NAD followed by a presumed transesterification to release the RNA and generate ADP-ribose 1''-2''-cyclic phosphate (APPR&gt;P). May function as an ADP-ribosylase. The protein is Probable RNA 2'-phosphotransferase of Pseudomonas fluorescens (strain ATCC BAA-477 / NRRL B-23932 / Pf-5).